Here is an 89-residue protein sequence, read N- to C-terminus: Small ribosomal subunit protein uS15 (89 aa).

This sequence belongs to the universal ribosomal protein uS15 family. As to quaternary structure, part of the 30S ribosomal subunit. Forms a bridge to the 50S subunit in the 70S ribosome, contacting the 23S rRNA.

One of the primary rRNA binding proteins, it binds directly to 16S rRNA where it helps nucleate assembly of the platform of the 30S subunit by binding and bridging several RNA helices of the 16S rRNA. Functionally, forms an intersubunit bridge (bridge B4) with the 23S rRNA of the 50S subunit in the ribosome. The sequence is that of Small ribosomal subunit protein uS15 from Pasteurella multocida (strain Pm70).